A 270-amino-acid polypeptide reads, in one-letter code: UPF0354 protein BCA_4815 (270 aa).

The protein belongs to the UPF0354 family.

This Bacillus cereus (strain 03BB102) protein is UPF0354 protein BCA_4815.